The sequence spans 71 residues: Small ribosomal subunit protein bS21 (71 aa).

Positions 39–71 are disordered; sequence EKPTQERKRKAAAAVKRQMRRTSRDVTKRKRLY. Basic residues predominate over residues 45 to 71; sequence RKRKAAAAVKRQMRRTSRDVTKRKRLY.

The protein belongs to the bacterial ribosomal protein bS21 family.

The chain is Small ribosomal subunit protein bS21 from Xylella fastidiosa (strain M12).